Consider the following 209-residue polypeptide: MGKFTVLNHPLIQHKLTLIRDKHAGTKEFREIANEIAELMVYEITRDLPLESIEIETPMGKTIQKQLAGKKLAVVPILRAGLGMVDGVLRLIPAAKVGHIGMYRDEKTLKPHEYFVKMPPDIEQRDLIIVDPMLATGGSANMAIEALKKRGATSMRLVVLVAAPEGVKAVQAANPDVDIYAAALDDHLNENGYIVPGLGDAGDRLFGTK.

5-phospho-alpha-D-ribose 1-diphosphate-binding positions include Arg-79, Arg-104, and 131-139 (DPMLATGGS). Uracil-binding positions include Ile-194 and 199–201 (GDA). A 5-phospho-alpha-D-ribose 1-diphosphate-binding site is contributed by Asp-200.

It belongs to the UPRTase family. Mg(2+) serves as cofactor.

It catalyses the reaction UMP + diphosphate = 5-phospho-alpha-D-ribose 1-diphosphate + uracil. It participates in pyrimidine metabolism; UMP biosynthesis via salvage pathway; UMP from uracil: step 1/1. With respect to regulation, allosterically activated by GTP. Catalyzes the conversion of uracil and 5-phospho-alpha-D-ribose 1-diphosphate (PRPP) to UMP and diphosphate. In Lacticaseibacillus paracasei (strain ATCC 334 / BCRC 17002 / CCUG 31169 / CIP 107868 / KCTC 3260 / NRRL B-441) (Lactobacillus paracasei), this protein is Uracil phosphoribosyltransferase.